A 456-amino-acid chain; its full sequence is GTP cyclohydrolase 1 (456 aa).

Residues C340, H343, and C412 each contribute to the Zn(2+) site.

It belongs to the GTP cyclohydrolase I family. In terms of assembly, homodimer. In terms of tissue distribution, expressed in leaves and unripe fruits.

The catalysed reaction is GTP + H2O = 7,8-dihydroneopterin 3'-triphosphate + formate + H(+). It participates in cofactor biosynthesis; 7,8-dihydroneopterin triphosphate biosynthesis; 7,8-dihydroneopterin triphosphate from GTP: step 1/1. Its function is as follows. GTP cyclohydrolase 1 is the first enzyme in the biosynthetic pathway leading to folic acid. The sequence is that of GTP cyclohydrolase 1 (GCH1) from Solanum lycopersicum (Tomato).